The sequence spans 586 residues: Transcription elongation regulator 1-like protein (586 aa).

The tract at residues 1 to 30 (MQAGARFQRRRRQLQQQQPRRRQPLLWPMD) is disordered. Over residues 7–23 (FQRRRRQLQQQQPRRRQ) the composition is skewed to basic residues. The region spanning 148–181 (TPIGKSWIDKRIPNCKIFFNNSFALDSTWIHPEE) is the WW 1 domain. Disordered stretches follow at residues 281 to 344 (TSPV…PGSP) and 378 to 448 (DLNR…QILL). Basic and acidic residues predominate over residues 306 to 317 (KSRDGDKEDKEP). The region spanning 339 to 372 (PVPGSPWCVVWTGDDRVFFFNPTMHLSVWEKPMD) is the WW 2 domain. Composition is skewed to basic and acidic residues over residues 378–387 (DLNRIIEDPP), 411–421 (DQDVKTKRNRT), and 428–439 (KPEEAKREDKGT). 2 FF domains span residues 450–503 (LEER…FVKT) and 515–570 (KLLL…FILI).

This is Transcription elongation regulator 1-like protein (TCERG1L) from Homo sapiens (Human).